A 100-amino-acid chain; its full sequence is Small ribosomal subunit protein uS14c (100 aa).

It belongs to the universal ribosomal protein uS14 family. In terms of assembly, part of the 30S ribosomal subunit.

The protein localises to the plastid. It is found in the chloroplast. In terms of biological role, binds 16S rRNA, required for the assembly of 30S particles. In Chlorokybus atmophyticus (Soil alga), this protein is Small ribosomal subunit protein uS14c.